Here is a 499-residue protein sequence, read N- to C-terminus: Putative DUF21 domain-containing protein At1g03270 (499 aa).

The Extracellular portion of the chain corresponds to 1-32 (MVVLSTLALVRAAYSLNSFVFEAEDIRFGSPW). The CNNM transmembrane domain occupies 29-211 (GSPWWFVVVG…GKGGELTHEE (183 aa)). Residues 33–53 (WFVVVGVACFLVLFAGIMSGL) traverse the membrane as a helical segment. Residues 54–91 (TLGLMSLGLVELEILQQSGSSAEKKQAAAILPVVKKQH) lie on the Cytoplasmic side of the membrane. The helical transmembrane segment at 92–112 (QLLVTLLLCNAAAMEALPICL) threads the bilayer. Topologically, residues 113-114 (DK) are extracellular. The chain crosses the membrane as a helical span at residues 115–135 (IFHPFVAVLLSVTFVLAFGEI). Residues 136 to 145 (IPQAICSRYG) lie on the Cytoplasmic side of the membrane. Residues 146–166 (LAVGANFLWLVRILMIICYPI) traverse the membrane as a helical segment. The Extracellular portion of the chain corresponds to 167-499 (AYPIGKVLDA…TEPLLAESDR (333 aa)). N181 carries an N-linked (GlcNAc...) asparagine glycan. 3 consecutive CBS domains span residues 230 to 291 (MTPI…EAPV), 295 to 359 (SIRK…SNLT), and 365 to 431 (HESH…IVDE). 3 N-linked (GlcNAc...) asparagine glycosylation sites follow: N357, N391, and N484.

It is found in the membrane. The sequence is that of Putative DUF21 domain-containing protein At1g03270 (CBSDUF4) from Arabidopsis thaliana (Mouse-ear cress).